The sequence spans 149 residues: UPF0178 protein HEAR0259 (149 aa).

It belongs to the UPF0178 family.

The sequence is that of UPF0178 protein HEAR0259 from Herminiimonas arsenicoxydans.